The sequence spans 545 residues: CTP synthase (545 aa).

The interval 1-265 (MTKYIFITGG…DEIVVKKLSL (265 aa)) is amidoligase domain. Residue S13 participates in CTP binding. S13 lines the UTP pocket. Residues 14–19 (SLGKGI) and D71 contribute to the ATP site. Positions 71 and 139 each coordinate Mg(2+). CTP is bound by residues 146–148 (DIE), 186–191 (KTKPTQ), and K222. Residues 186 to 191 (KTKPTQ) and K222 each bind UTP. The Glutamine amidotransferase type-1 domain maps to 290 to 541 (KIAMVGKYTE…VLAARIHHQE (252 aa)). G351 contributes to the L-glutamine binding site. C378 functions as the Nucleophile; for glutamine hydrolysis in the catalytic mechanism. L-glutamine-binding positions include 379–382 (LGMQ), E402, and R469. Catalysis depends on residues H514 and E516.

It belongs to the CTP synthase family. Homotetramer.

The catalysed reaction is UTP + L-glutamine + ATP + H2O = CTP + L-glutamate + ADP + phosphate + 2 H(+). It carries out the reaction L-glutamine + H2O = L-glutamate + NH4(+). It catalyses the reaction UTP + NH4(+) + ATP = CTP + ADP + phosphate + 2 H(+). The protein operates within pyrimidine metabolism; CTP biosynthesis via de novo pathway; CTP from UDP: step 2/2. Allosterically activated by GTP, when glutamine is the substrate; GTP has no effect on the reaction when ammonia is the substrate. The allosteric effector GTP functions by stabilizing the protein conformation that binds the tetrahedral intermediate(s) formed during glutamine hydrolysis. Inhibited by the product CTP, via allosteric rather than competitive inhibition. Catalyzes the ATP-dependent amination of UTP to CTP with either L-glutamine or ammonia as the source of nitrogen. Regulates intracellular CTP levels through interactions with the four ribonucleotide triphosphates. This chain is CTP synthase, found in Legionella pneumophila (strain Corby).